Consider the following 946-residue polypeptide: Protein translocase subunit SecA (946 aa).

ATP contacts are provided by residues glutamine 87, 105-109 (GEGKT), and aspartate 524. Residues 904–933 (PAQTTDKADRDPNKPETWGKVGRNEDCPCG) form a disordered region. 4 residues coordinate Zn(2+): cysteine 930, cysteine 932, cysteine 941, and histidine 942.

The protein belongs to the SecA family. As to quaternary structure, monomer and homodimer. Part of the essential Sec protein translocation apparatus which comprises SecA, SecYEG and auxiliary proteins SecDF-YajC and YidC. It depends on Zn(2+) as a cofactor.

The protein resides in the cell inner membrane. It is found in the cytoplasm. The catalysed reaction is ATP + H2O + cellular proteinSide 1 = ADP + phosphate + cellular proteinSide 2.. In terms of biological role, part of the Sec protein translocase complex. Interacts with the SecYEG preprotein conducting channel. Has a central role in coupling the hydrolysis of ATP to the transfer of proteins into and across the cell membrane, serving both as a receptor for the preprotein-SecB complex and as an ATP-driven molecular motor driving the stepwise translocation of polypeptide chains across the membrane. The sequence is that of Protein translocase subunit SecA from Rhodopseudomonas palustris (strain TIE-1).